A 429-amino-acid polypeptide reads, in one-letter code: Saccharopine dehydrogenase-like oxidoreductase (429 aa).

A2 is modified (N-acetylalanine). S209, S215, and S217 each carry phosphoserine.

The protein belongs to the saccharopine dehydrogenase family.

The sequence is that of Saccharopine dehydrogenase-like oxidoreductase (Sccpdh) from Rattus norvegicus (Rat).